A 282-amino-acid polypeptide reads, in one-letter code: MSFSGHSARKRFGQHWLKDVAILEKIVEAAELCENDRVLEIGPGRGALTHKLLNSKVSLVHAIELDTDLVVGLRERFFHETRFSLKGGDALKISLLPPDGIEVNKVVANIPYNITSPLLERLIGKLGFFPETRYERLVLLLQKEVADRILAMPGQSSFSAMSVRVQLLCKSRSVCDVSPKCFKPSPKVHSKVVVIEPFAFSERLNVDIEKRVESLLRTAFLGRRKKLRNTLASIRPLNQLESLADQLGISLNQRPQEISPMMWVSLAKRIHDMDKLVGEIQS.

The S-adenosyl-L-methionine site is built by histidine 15, leucine 17, glycine 42, glutamate 64, aspartate 89, and asparagine 109.

It belongs to the class I-like SAM-binding methyltransferase superfamily. rRNA adenine N(6)-methyltransferase family. RsmA subfamily.

Its subcellular location is the cytoplasm. The enzyme catalyses adenosine(1518)/adenosine(1519) in 16S rRNA + 4 S-adenosyl-L-methionine = N(6)-dimethyladenosine(1518)/N(6)-dimethyladenosine(1519) in 16S rRNA + 4 S-adenosyl-L-homocysteine + 4 H(+). Specifically dimethylates two adjacent adenosines (A1518 and A1519) in the loop of a conserved hairpin near the 3'-end of 16S rRNA in the 30S particle. May play a critical role in biogenesis of 30S subunits. This Prochlorococcus marinus (strain MIT 9211) protein is Ribosomal RNA small subunit methyltransferase A.